Here is a 334-residue protein sequence, read N- to C-terminus: Putative lysine N-acyltransferase C17G9.06c (334 aa).

A substrate-binding site is contributed by H248. E286 (proton acceptor) is an active-site residue.

This sequence belongs to the lysine N-acyltransferase mbtK family.

The protein resides in the cytoplasm. The protein localises to the nucleus. The polypeptide is Putative lysine N-acyltransferase C17G9.06c (Schizosaccharomyces pombe (strain 972 / ATCC 24843) (Fission yeast)).